An 813-amino-acid chain; its full sequence is MDATALERDAVQFARLAVQRDHEGRYSEAVFYYKEAAQALIYAEMAGSSLENIQEKITEYLERVQALHSAVQSKSADPLKSKHQLDLERAHFLVTQAFDEDEKENVEDAIELYTEAVDLCLKTSYETADKVLQNKLKQLARQALDRAEALSEPLTKPVGKISSTSVKPKPPPVRAHFPLGANPFLERPQSFISPQSCDAQGQRYTAEEIEVLRTTSKINGIEYVPFMNVDLRERFAYPMPFCDRWGKLPLSPKQKTTFSKWVRPEDLTNNPTMIYTVSSFSIKQTIVSDCSFVASLAISAAYERRFNKKLITGIIYPQNKDGEPEYNPCGKYMVKLHLNGVPRKVIIDDQLPVDHKGELLCSYSNNKSELWVSLIEKAYMKVMGGYDFPGSNSNIDLHALTGWIPERIAMHSDSQTFSKDNSFRMLYQRFHKGDVLITASTGMMTEAEGEKWGLVPTHAYAVLDIREFKGLRFIQLKNPWSHLRWKGRYSENDVKNWTPELQKYLNFDPRTAQKIDNGIFWISWDDLCQYYDVIYLSWNPGLFKESTCIHSTWDAKQGPVKDAYSLANNPQYKLEVQCPQGGAAVWVLLSRHITDKDDFANNREFITMVVYKTDGKKVYYPADPPPYIDGIRINSPHYLTKIKLTTPGTHTFTLVVSQYEKQNTIHYTVRVYSACSFTFSKIPSPYTLSKRINGKWSGQSAGGCGNFQETHKNNPIYQFHIEKTGPLLIELRGPRQYSVGFEVVTVSTLGDPGPHGFLRKSSGDYRCGFCYLELENIPSGIFNIIPSTFLPKQEGPFFLDFNSIIPIKITQLQ.

Met-1 carries the post-translational modification N-acetylmethionine. Thr-95 is subject to Phosphothreonine. One can recognise a Calpain catalytic domain in the interval 232–540; sequence RERFAYPMPF…YDVIYLSWNP (309 aa). Catalysis depends on residues Cys-290, His-458, and Asn-478. The interval 541–701 is domain III; sequence GLFKESTCIH…INGKWSGQSA (161 aa). The interval 702-813 is domain N; it reads GGCGNFQETH…IIPIKITQLQ (112 aa).

The protein belongs to the peptidase C2 family. In terms of tissue distribution, ubiquitous.

The protein resides in the nucleus. Calcium-regulated non-lysosomal thiol-protease. The sequence is that of Calpain-7 (CAPN7) from Homo sapiens (Human).